Reading from the N-terminus, the 544-residue chain is Chaperonin GroEL 3 (544 aa).

ATP contacts are provided by residues 30–33, K51, 87–91, G415, and D496; these read TLGP and DGTTT.

It belongs to the chaperonin (HSP60) family. Forms a cylinder of 14 subunits composed of two heptameric rings stacked back-to-back. Interacts with the co-chaperonin GroES.

The protein resides in the cytoplasm. The enzyme catalyses ATP + H2O + a folded polypeptide = ADP + phosphate + an unfolded polypeptide.. Together with its co-chaperonin GroES, plays an essential role in assisting protein folding. The GroEL-GroES system forms a nano-cage that allows encapsulation of the non-native substrate proteins and provides a physical environment optimized to promote and accelerate protein folding. The sequence is that of Chaperonin GroEL 3 from Rhizobium meliloti (strain 1021) (Ensifer meliloti).